A 710-amino-acid chain; its full sequence is Assimilatory nitrate reductase catalytic subunit (710 aa).

The region spanning 19-77 is the 4Fe-4S Mo/W bis-MGD-type domain; it reads EKTYDTQCPFCSMQCKMQLVEQTIVTRKKYTAIGIDNPTTQGRLCIKGMNAHQHALNSS. [4Fe-4S] cluster-binding residues include cysteine 26, cysteine 29, cysteine 33, and cysteine 63.

It belongs to the prokaryotic molybdopterin-containing oxidoreductase family. Requires [4Fe-4S] cluster as cofactor. The cofactor is Mo-bis(molybdopterin guanine dinucleotide).

It participates in nitrogen metabolism; nitrate reduction (denitrification); dinitrogen from nitrate: step 1/4. Functionally, nitrate reductase is a key enzyme involved in the first step of nitrate assimilation in plants, fungi and bacteria. The chain is Assimilatory nitrate reductase catalytic subunit (nasC) from Bacillus subtilis (strain 168).